The following is a 301-amino-acid chain: Dimethylsulfoniopropionate lyase (301 aa).

Catalysis depends on proton donor/acceptor residues C111 and C230.

It belongs to the aspartate/glutamate racemases family. ALMA1 subfamily. As to quaternary structure, homotetramer.

It catalyses the reaction S,S-dimethyl-beta-propiothetin = acrylate + dimethyl sulfide + H(+). Functionally, mediates cleavage of dimethylsulfoniopropionate (DMSP) into dimethyl sulfide (DMS) and acrylate. DMS is the principal form by which sulfur is transported from oceans to the atmosphere and is a key component of the ocean sulfur cycle. This Durusdinium sp. clade D (Symbiodinium sp. clade D) protein is Dimethylsulfoniopropionate lyase.